We begin with the raw amino-acid sequence, 1018 residues long: D-2-hydroxyglutarate dehydrogenase (1018 aa).

Positions 48–281 (YQLLPDAVVF…TEARLDITRL (234 aa)) constitute an FAD-binding PCMH-type domain. (R)-2-hydroxyglutarate contacts are provided by R402 and H500. The 4Fe-4S ferredoxin-type domain occupies 662–695 (FSHEVKEAMSGCLACKACSTQCPIKIDVPEFRSR). Residues C673, C676, C679, and C683 each coordinate [4Fe-4S] cluster.

This sequence in the N-terminal section; belongs to the FAD-binding oxidoreductase/transferase type 4 family. As to quaternary structure, homotetramer. [4Fe-4S] cluster serves as cofactor. The cofactor is FAD.

It catalyses the reaction (R)-2-hydroxyglutarate + A = 2-oxoglutarate + AH2. With respect to regulation, activity is completely inhibited by the addition of 0.5 mM Mn(2+), Ni(2+), or Co(2+) and partially inhibited by 0.5 mM Zn(2+). Its function is as follows. Catalyzes the oxidation of D-2-hydroxyglutarate (D-2-HGA) to 2-oxoglutarate. Appears to be the only D2HGDH in E.coli, providing the way to recycle D-2-HGA produced during L-serine synthesis by SerA, by converting it back to 2-oxoglutarate. The physiological molecule that functions as the primary electron acceptor during D-2-HGA oxidation by YdiJ in E.coli is unknown. Shows strict substrate specificity towards D-2-HGA, since it has no detectable activity on L-2-hydroxyglutarate, L-malate, D-malate, L-lactate, D-lactate, L-tartrate, D-tartrate, L-glycerate, D-glycerate, glutarate, or pyruvate. The chain is D-2-hydroxyglutarate dehydrogenase (ydiJ) from Escherichia coli (strain K12).